Consider the following 308-residue polypeptide: Dual oxidase maturation factor 1 (308 aa).

Residues 1-21 are Extracellular-facing; that stretch reads MQANIFPFYPQPRTPFKFDTK. A helical transmembrane segment spans residues 22–42; it reads IIEIIIICIVTACTFIIILPG. Residues 43–49 are Cytoplasmic-facing; it reads IRGKSRS. The chain crosses the membrane as a helical span at residues 50–70; the sequence is IWLLRILTSLFIGAVILAVNF. The Extracellular segment spans residues 71–91; it reads TSDWEMGTITATTVYKSFSHS. The chain crosses the membrane as a helical span at residues 92–112; it reads MLNASIGLWIGLKGLNITLIG. Residues 113–175 are Cytoplasmic-facing; the sequence is NPEYQLNETI…GLFQQYCIST (63 aa). A helical transmembrane segment spans residues 176 to 198; it reads YYSSGIMWIAFCSWILYNVLFSM. A topological domain (extracellular) is located at residue P199. A helical membrane pass occupies residues 200–220; sequence VILYGIYMMFVTAICMLVSLI. Topologically, residues 221-247 are cytoplasmic; the sequence is SFASVRKAPVCNIQFGNSILKTHFGVS. Residues 248-268 traverse the membrane as a helical segment; it reads YWLSLITGLLCLIISLVLLFL. Over 269–308 the chain is Extracellular; it reads YKTQPKVLQLIFSYGEEEDLSNKSENEEEHSSVLSLNEIL. N290 carries N-linked (GlcNAc...) asparagine glycosylation.

This sequence belongs to the DUOXA family.

The protein localises to the membrane. Possible role in maturation and transport from the endoplasmic reticulum to the plasma membrane of functional dual oxidase. The protein is Dual oxidase maturation factor 1 (duoxa1) of Xenopus laevis (African clawed frog).